We begin with the raw amino-acid sequence, 148 residues long: Lysozyme C (148 aa).

Residues 1 to 18 (MKVLILLGLVLLSVMVQG) form the signal peptide. The 130-residue stretch at 19-148 (KVFERCELAR…VSQYIQGCGV (130 aa)) folds into the C-type lysozyme domain. Disulfide bonds link Cys24–Cys146, Cys48–Cys134, Cys83–Cys99, and Cys95–Cys113. Residues Glu53 and Asp71 contribute to the active site.

The protein belongs to the glycosyl hydrolase 22 family. Monomer.

The protein resides in the secreted. It carries out the reaction Hydrolysis of (1-&gt;4)-beta-linkages between N-acetylmuramic acid and N-acetyl-D-glucosamine residues in a peptidoglycan and between N-acetyl-D-glucosamine residues in chitodextrins.. Its function is as follows. Lysozymes have primarily a bacteriolytic function; those in tissues and body fluids are associated with the monocyte-macrophage system and enhance the activity of immunoagents. The protein is Lysozyme C (LYZ) of Saguinus oedipus (Cotton-top tamarin).